The primary structure comprises 261 residues: Protein phosphatase inhibitor 2 (261 aa).

The span at 1 to 16 (MNKDEEFLEEHHYKDD) shows a compositional bias: basic and acidic residues. The interval 1–150 (MNKDEEFLEE…TPYHYYESEE (150 aa)) is required for binding to pppB. Positions 1–261 (MNKDEEFLEE…LNANLSDDEQ (261 aa)) are disordered. The segment covering 17–60 (DAIEGEEEQGEEEESDLDDDMYNIDGETNDDDDDDEAEDEESSE) has biased composition (acidic residues). Polar residues predominate over residues 123–134 (LTINDMNKSSTM). The stretch at 150–242 (EETDESKKYL…KKFDNLRKAH (93 aa)) forms a coiled coil. A compositionally biased stretch (basic and acidic residues) spans 154-163 (ESKKYLENKF). Basic residues predominate over residues 195–206 (DKKKKKKNLKIH). Positions 212 to 225 (DDNDDNEDEDEDET) are enriched in acidic residues. The segment covering 226–250 (EEKKENKKKFDNLRKAHYNEFKVVR) has biased composition (basic and acidic residues).

Belongs to the protein phosphatase inhibitor 2 family. Interacts with pppB.

In terms of biological role, inhibitor of protein-phosphatase 1 (PP1). The sequence is that of Protein phosphatase inhibitor 2 (dpiA) from Dictyostelium discoideum (Social amoeba).